The primary structure comprises 245 residues: Deoxyadenosine kinase (245 aa).

28–36 (GLIGAGKTT) is an ATP binding site. Positions 52, 64, and 75 each coordinate substrate. Asp99 serves as the catalytic Proton acceptor. Positions 100, 105, and 165 each coordinate substrate.

It belongs to the DCK/DGK family.

It carries out the reaction 2'-deoxyadenosine + ATP = dAMP + ADP + H(+). Its function is as follows. Specific kinase that phosphorylates deoxyadenosine but not any other deoxyribonucleoside, as part of the deoxyribonucleotide salvage pathway. This chain is Deoxyadenosine kinase (dak), found in Dictyostelium discoideum (Social amoeba).